Here is a 216-residue protein sequence, read N- to C-terminus: Small ribosomal subunit protein uS3 (216 aa).

Residues 20-91 (LKEFFEKALV…SVEIVVEKVH (72 aa)) form the KH type-2 domain.

It belongs to the universal ribosomal protein uS3 family.

The sequence is that of Small ribosomal subunit protein uS3 (RPS3) from Encephalitozoon cuniculi (strain GB-M1) (Microsporidian parasite).